The sequence spans 62 residues: UPF0291 protein CLJ_B2839 (62 aa).

It belongs to the UPF0291 family.

The protein resides in the cytoplasm. This Clostridium botulinum (strain 657 / Type Ba4) protein is UPF0291 protein CLJ_B2839.